The chain runs to 282 residues: uncharacterized protein (282 aa).

The next 4 membrane-spanning stretches (helical) occupy residues 130-150, 170-190, 191-211, and 223-243; these read WALL…GFGL, STSW…WPSA, AAGL…YVIV, and ILTH…WRSA. The segment at 263-282 is disordered; the sequence is DNASRGRRRGHLWPTDGSAA.

The protein localises to the cell membrane. This is an uncharacterized protein from Mycobacterium tuberculosis (strain CDC 1551 / Oshkosh).